A 192-amino-acid polypeptide reads, in one-letter code: Chromophore lyase CpcS/CpeS 2 (192 aa).

It belongs to the CpcS/CpeS biliprotein lyase family.

Functionally, covalently attaches a chromophore to Cys residue(s) of phycobiliproteins. In Synechocystis sp. (strain ATCC 27184 / PCC 6803 / Kazusa), this protein is Chromophore lyase CpcS/CpeS 2.